Reading from the N-terminus, the 202-residue chain is Holliday junction resolvase RecU (202 aa).

Mg(2+) is bound by residues Thr85, Asp87, Glu100, and Gln119.

This sequence belongs to the RecU family. Mg(2+) serves as cofactor.

The protein localises to the cytoplasm. The enzyme catalyses Endonucleolytic cleavage at a junction such as a reciprocal single-stranded crossover between two homologous DNA duplexes (Holliday junction).. Functionally, endonuclease that resolves Holliday junction intermediates in genetic recombination. Cleaves mobile four-strand junctions by introducing symmetrical nicks in paired strands. Promotes annealing of linear ssDNA with homologous dsDNA. Required for DNA repair, homologous recombination and chromosome segregation. This chain is Holliday junction resolvase RecU, found in Streptococcus uberis (strain ATCC BAA-854 / 0140J).